Consider the following 325-residue polypeptide: Tetraacyldisaccharide 4'-kinase (325 aa).

Thr55–Thr62 contacts ATP.

This sequence belongs to the LpxK family.

It catalyses the reaction a lipid A disaccharide + ATP = a lipid IVA + ADP + H(+). Its pathway is glycolipid biosynthesis; lipid IV(A) biosynthesis; lipid IV(A) from (3R)-3-hydroxytetradecanoyl-[acyl-carrier-protein] and UDP-N-acetyl-alpha-D-glucosamine: step 6/6. In terms of biological role, transfers the gamma-phosphate of ATP to the 4'-position of a tetraacyldisaccharide 1-phosphate intermediate (termed DS-1-P) to form tetraacyldisaccharide 1,4'-bis-phosphate (lipid IVA). In Citrobacter koseri (strain ATCC BAA-895 / CDC 4225-83 / SGSC4696), this protein is Tetraacyldisaccharide 4'-kinase.